Consider the following 118-residue polypeptide: Large ribosomal subunit protein bL20 (118 aa).

Belongs to the bacterial ribosomal protein bL20 family.

Its function is as follows. Binds directly to 23S ribosomal RNA and is necessary for the in vitro assembly process of the 50S ribosomal subunit. It is not involved in the protein synthesizing functions of that subunit. This Ralstonia nicotianae (strain ATCC BAA-1114 / GMI1000) (Ralstonia solanacearum) protein is Large ribosomal subunit protein bL20.